The chain runs to 492 residues: Solute carrier family 2, facilitated glucose transporter member 1 (492 aa).

The residue at position 1 (methionine 1) is an N-acetylmethionine. Over 1–11 the chain is Cytoplasmic; it reads MEPTSKKLTGR. Residues 12–33 traverse the membrane as a helical segment; it reads LMLAVGGAVLGSLQFGYNTGVI. Over 34–66 the chain is Extracellular; that stretch reads NAPQKVIEEFYNQTWVQRYGEPIPPATLTTLWS. N-linked (GlcNAc...) asparagine glycosylation is present at asparagine 45. A helical transmembrane segment spans residues 67–87; that stretch reads LSVAIFSVGGMIGSFSVGLFV. The Cytoplasmic segment spans residues 88-90; it reads NRF. A helical transmembrane segment spans residues 91 to 112; the sequence is GRRNSMLMMNLLAFVSAVLMGF. The Extracellular portion of the chain corresponds to 113-120; that stretch reads SKLGKSFE. A helical transmembrane segment spans residues 121 to 144; it reads MLILGRFIIGVYCGLTTGFVPMYV. The Cytoplasmic portion of the chain corresponds to 145-155; sequence GEVSPTELRGA. Residues 156 to 176 traverse the membrane as a helical segment; it reads LGTLHQLGIVVGILIAQVFGL. Glutamine 161 serves as a coordination point for D-glucose. The Extracellular portion of the chain corresponds to 177–185; sequence DSIMGNQEL. Residues 186 to 206 traverse the membrane as a helical segment; sequence WPLLLSVIFIPALLQCILLPF. Over 207 to 271 the chain is Cytoplasmic; it reads CPESPRFLLI…LFRSAAYRQP (65 aa). Phosphoserine is present on serine 226. Residues 272–293 form a helical membrane-spanning segment; that stretch reads ILIAVVLQLSQQLSGINAVFYY. D-glucose contacts are provided by residues 282-283 and asparagine 288; that span reads QQ. Topologically, residues 294 to 306 are extracellular; it reads STSIFEKAGVQQP. Residues 307 to 328 traverse the membrane as a helical segment; the sequence is VYATIGSGIVNTAFTVVSLFVV. A D-glucose-binding site is contributed by asparagine 317. Residues 329-334 are Cytoplasmic-facing; it reads ERAGRR. Residues 335-355 traverse the membrane as a helical segment; that stretch reads TLHLIGLAGMAGCAVLMTIAL. Residues 356 to 365 lie on the Extracellular side of the membrane; that stretch reads ALLERLPWMS. Residues 366–388 traverse the membrane as a helical segment; the sequence is YLSIVAIFGFVAFFEVGPGPIPW. Residues glutamate 380 and tryptophan 388 each coordinate D-glucose. The Cytoplasmic segment spans residues 389-401; it reads FIVAELFSQGPRP. Residues 402–422 form a helical membrane-spanning segment; sequence AAIAVAGFSNWTSNFIVGMCF. Topologically, residues 423-429 are extracellular; that stretch reads QYVEQLC. A helical transmembrane segment spans residues 430–450; sequence GPYVFIIFTVLLVLFFIFTYF. Topologically, residues 451 to 492 are cytoplasmic; it reads KVPETKGRTFDEIASGFRQGGASQSDKTPEELFHPLGADSQV. Serine 465 is subject to Phosphoserine. Residues 468–492 form a disordered region; sequence RQGGASQSDKTPEELFHPLGADSQV. Residue threonine 478 is modified to Phosphothreonine. Phosphoserine is present on serine 490.

Belongs to the major facilitator superfamily. Sugar transporter (TC 2.A.1.1) family. Glucose transporter subfamily. In terms of assembly, found in a complex with ADD2, DMTN and SLC2A1. Interacts (via C-terminus cytoplasmic region) with DMTN. Interacts with SNX27; the interaction is required when endocytosed to prevent degradation in lysosomes and promote recycling to the plasma membrane. Interacts with GIPC (via PDZ domain). Interacts with STOM. Interacts with SGTA (via Gln-rich region). Interacts with BSG. Interacts with SMIM43; the interaction may promote SLC2A1-mediated glucose transport to meet the energy needs of mesendoderm differentiation. In terms of processing, phosphorylation at Ser-226 by PKC promotes glucose uptake by increasing cell membrane localization. Detected in brain capillary (at protein level). Detected in brain capillary.

It localises to the cell membrane. The protein localises to the photoreceptor inner segment. The catalysed reaction is D-glucose(out) = D-glucose(in). The uptake of glucose is inhibited by cytochalasin B. Glucose uptake is increased in response to phorbol ester 12-O-tetradecanoylphorbol-13-acetate (TPA) treatment: TPA-induced glucose uptake requires phosphorylation at Ser-226. In terms of biological role, facilitative glucose transporter, which is responsible for constitutive or basal glucose uptake. Has a very broad substrate specificity; can transport a wide range of aldoses including both pentoses and hexoses. Most important energy carrier of the brain: present at the blood-brain barrier and assures the energy-independent, facilitative transport of glucose into the brain. In association with BSG and NXNL1, promotes retinal cone survival by increasing glucose uptake into photoreceptors. Required for mesendoderm differentiation. In Bos taurus (Bovine), this protein is Solute carrier family 2, facilitated glucose transporter member 1.